Consider the following 368-residue polypeptide: MTTLTTTPRADGFHMPAEWAPHSQTWMVWPERPDNWRNGGKPAQAAFTAVAKAIAQFEPVTVCVSAAQYENARARLDDDNIRLVEITTDDAWVRDTGPTFVINGRGEVRGVDWTFNAWGGFDGGLYWPWQRDDQVARKILDIEGCKRYRTEGFVLEGGSIHVDGEGTLITTEECLLNRNRNPHLSREEIEAVLREHLAIDTVIWLPEGLYNDETDGHVDNFCCYVRPGEVLLAWTDDQNDPNYPRCQAAMRVLESVRDAKGRQLIVHKMPIPGPIHASEEECAGVDAAEGSQERSPAVRLAGSYVNFLIVNGGIVAPSFDDPKDAEARAILQQVFPEHRVVMVPGREILLGGGNIHCITQQQPAPQGA.

Cys-357 (amidino-cysteine intermediate) is an active-site residue.

Belongs to the agmatine deiminase family. In terms of assembly, homodimer.

It carries out the reaction agmatine + H2O = N-carbamoylputrescine + NH4(+). Its pathway is amine and polyamine biosynthesis; putrescine biosynthesis via agmatine pathway; N-carbamoylputrescine from agmatine: step 1/1. Functionally, mediates the hydrolysis of agmatine into N-carbamoylputrescine in the arginine decarboxylase (ADC) pathway of putrescine biosynthesis, a basic polyamine. The protein is Agmatine deiminase of Ectopseudomonas mendocina (strain ymp) (Pseudomonas mendocina).